Reading from the N-terminus, the 95-residue chain is Feather keratin B-4 (95 aa).

N-acetylserine is present on S1.

It belongs to the avian keratin family. The avian keratins (F-ker, S-ker, C-ker and B-ker) are a complex mixture of very similar polypeptides.

In Anas platyrhynchos (Mallard), this protein is Feather keratin B-4.